The primary structure comprises 377 residues: MEQLSAANTRFAVDLFLTLTEHNPAGNIFISPFSISSALAMVFLGARGDTAAQMSKALHFEGVEIHSGFQSLNADINKCGAPYTLKLANRLFGEKSYDFLPEFLASTQEMYSAELASVDFLRAPEDARKTINAWVKEQTGGKIPELLASGMVDSLTKLVLVNAIYFKGKWQEKFMVEATKDAPFRLNKKETKTVKMMYQKKKFPFGYIKDLKCRVLELPYEGKDLSMVILLPDDIQDEATGLKKIEQQLTLEKLREWTRPESLDLLEVRVQLPRFKLEESYDLQEPLARLGVRDLFSSKADLSGMSGAKDLFISKVVHKSVVDVNEEGTEAAAATGAIAEFAMLVPEEEFVADHPFIFFIRHKPSSNILFLGRLSSP.

Residue M1 is modified to N-acetylmethionine. K136 bears the N6-acetyllysine mark. S298 carries the phosphoserine modification. Residues 349–377 (EFVADHPFIFFIRHKPSSNILFLGRLSSP) form a CARD-binding motif (CBM) region.

The protein belongs to the serpin family. Ov-serpin subfamily. As to quaternary structure, monomer. Interacts (via C-terminus) with CASP1; CASP4 (via CARD domain) and CASP5; these interactions regulate the activity of inflammatory caspases. Interacts with PRTN3. Interacts with GZMH.

It is found in the secreted. The protein localises to the cytoplasm. The protein resides in the cytolytic granule. Its subcellular location is the early endosome. Neutrophil serine protease inhibitor that plays an essential role in the regulation of the innate immune response, inflammation and cellular homeostasis. Acts primarily to protect the cell from proteases released in the cytoplasm during stress or infection. These proteases are important in killing microbes but when released from granules, these potent enzymes also destroy host proteins and contribute to mortality. Regulates the activity of the neutrophil proteases elastase, cathepsin G, proteinase-3, chymase, chymotrypsin, and kallikrein-3. Also acts as a potent intracellular inhibitor of GZMH by directly blocking its proteolytic activity. During inflammation, limits the activity of inflammatory caspases CASP1, CASP4 and CASP5 by suppressing their caspase-recruitment domain (CARD) oligomerization and enzymatic activation. When secreted, promotes the proliferation of beta-cells via its protease inhibitory function. The protein is Leukocyte elastase inhibitor (SERPINB1) of Bos taurus (Bovine).